A 66-amino-acid polypeptide reads, in one-letter code: Large ribosomal subunit protein uL29 (66 aa).

Belongs to the universal ribosomal protein uL29 family.

The chain is Large ribosomal subunit protein uL29 from Geobacillus kaustophilus (strain HTA426).